The primary structure comprises 40 residues: Protamine-2 (40 aa).

A disordered region spans residues 1-40; the sequence is MPPRRKRVSSAPRRRRRTYRRTTAHKHQERPVHRRRRRRH.

In terms of tissue distribution, testis.

It is found in the nucleus. Its subcellular location is the chromosome. Functionally, protamines substitute for histones in the chromatin of sperm during the haploid phase of spermatogenesis. They compact sperm DNA into a highly condensed, stable and inactive complex. This Bufo japonicus (Japanese common toad) protein is Protamine-2 (PBP2).